We begin with the raw amino-acid sequence, 371 residues long: uncharacterized protein (371 aa).

Solcar repeat units follow at residues 3–98 (DDSL…CKVL), 131–276 (RYWG…FKSF), and 284–369 (KSNF…VRKW). 6 consecutive transmembrane segments (helical) span residues 9-29 (AIAGGAAGLASSLVVAPLDVV), 73-93 (GVGPMMLGYLPSWSIYFVVYE), 137-157 (IFSAVIAGAASVTLTNPIWVV), 253-273 (LFPSLFGTLHVGIQFPLYEYF), 290-310 (VLAATLSKIAASTVTYPHEVL), and 341-362 (YYSGMATNFIRTIPASSVTFLS).

It belongs to the mitochondrial carrier (TC 2.A.29) family.

It localises to the mitochondrion inner membrane. This is an uncharacterized protein from Schizosaccharomyces pombe (strain 972 / ATCC 24843) (Fission yeast).